Consider the following 174-residue polypeptide: Type II secretion system protein M (174 aa).

Topologically, residues 1-32 are cytoplasmic; the sequence is MKVMTQFHERLRAQAETSQLAIRWRGLPARDR. A helical transmembrane segment spans residues 33-52; it reads LALLWLGAFLLLVVLYLALW. Topologically, residues 53-174 are periplasmic; that stretch reads RPAERHLQSA…VSARLSLRVE (122 aa).

The protein belongs to the GSP M family. As to quaternary structure, type II secretion system is composed of four main components: the outer membrane complex, the inner membrane complex, the cytoplasmic secretion ATPase and the periplasm-spanning pseudopilus. Forms homodimers. Interacts with XcpY/GspL. Interacts with XcpR/GspE and XcpS/GspF.

It is found in the cell inner membrane. Functionally, inner membrane component of the type II secretion system required for the energy-dependent secretion of extracellular factors such as proteases and toxins from the periplasm. Plays a role in the complex assembly and recruits XcpY resulting in a stable complex in the inner membrane. Provides thus a link between the energy-providing XcpR protein in the cytoplasm and the rest of the T2SS machinery. The sequence is that of Type II secretion system protein M (xcpZ) from Pseudomonas aeruginosa (strain ATCC 15692 / DSM 22644 / CIP 104116 / JCM 14847 / LMG 12228 / 1C / PRS 101 / PAO1).